The following is a 417-amino-acid chain: Glucose-1-phosphate adenylyltransferase (417 aa).

Alpha-D-glucose 1-phosphate contacts are provided by residues tyrosine 105, glycine 170, 185-186, and serine 203; that span reads EK.

The protein belongs to the bacterial/plant glucose-1-phosphate adenylyltransferase family. Homotetramer.

The enzyme catalyses alpha-D-glucose 1-phosphate + ATP + H(+) = ADP-alpha-D-glucose + diphosphate. Its pathway is glycan biosynthesis; glycogen biosynthesis. In terms of biological role, involved in the biosynthesis of ADP-glucose, a building block required for the elongation reactions to produce glycogen. Catalyzes the reaction between ATP and alpha-D-glucose 1-phosphate (G1P) to produce pyrophosphate and ADP-Glc. The sequence is that of Glucose-1-phosphate adenylyltransferase from Granulibacter bethesdensis (strain ATCC BAA-1260 / CGDNIH1).